The following is a 630-amino-acid chain: MENSTTTISREELEELQEAFNKIDIDNSGYVSDYELQDLFKEASLPLPGYKVREIVEKILAVADNNKDSRISFEEFVSLMQELKSKDISKTFRKIINKREGITAIGGTSSISSEGTQHSYSEEEKVAFVNWINKALENDPDCKHLIPMNPNDDSLFKSLADGILLCKMINLSEPDTIDERAINKKKLTPFTISENLNLALNSASAIGCTVVNIGAQDLTEGKPHLVLGLLWQIIKVGLFADIEISRNEALIALLKEGEDLEELMRLSPEELLLQWVNYHLTNAGWPTISNFSHDIKDSRAYFHLLNQIAPKGDRDDGPAIAIDLTGFSEKNDLKRAEFMLQEADKLGCRQFVTPADVVSGNPKLNLAFVANLFNTYPGLHKPDNNDIDVNLLEGESKEERTFRNWMNSLGVNPYINHLYSDLADALVIFQLYEMIRVPVDWSHVNKPPYPALGGNMKKIENCNYAVELGKNKAKFSLVGIAGQDLNEGNSTLTLALVWQLMRRYTLNVLSDLGEGEKVNDAIIIEWVNQTLKSANKNTFISSFKDKSISTSLPVLDLIDAIAPNAVRQEMIKREDLSDEDKLNNAKYAISVARKIGARIYALPDDLVEVKPKMVMTVFACLMGKGLNKIK.

Position 1 is an N-acetylmethionine (methionine 1). EF-hand domains lie at 11-46 (EELE…ASLP) and 51-86 (KVRE…LKSK). Positions 24, 26, 28, 30, 35, 64, 66, 68, 70, and 75 each coordinate Ca(2+). Actin-binding stretches follow at residues 108–381 (TSSI…GLHK) and 382–626 (PDNN…GKGL). 4 consecutive Calponin-homology (CH) domains span residues 122–238 (EEEK…KVGL), 266–377 (LSPE…NTYP), 396–505 (SKEE…RRYT), and 517–626 (KVND…GKGL).

As to quaternary structure, monomer. Post-translationally, phosphorylated.

Its subcellular location is the cytoplasm. The protein localises to the cell projection. It localises to the stereocilium. Actin-bundling protein. In the inner ear, it is required for stereocilia formation. Mediates liquid packing of actin filaments that is necessary for stereocilia to grow to their proper dimensions. This chain is Plastin-1 (PLS1), found in Bos taurus (Bovine).